We begin with the raw amino-acid sequence, 350 residues long: Anthranilate phosphoribosyltransferase (350 aa).

5-phospho-alpha-D-ribose 1-diphosphate is bound by residues glycine 88, 91 to 92 (GD), threonine 96, 98 to 101 (NIST), 116 to 124 (KHGGRSVSS), and serine 128. Glycine 88 contributes to the anthranilate binding site. Residue serine 100 participates in Mg(2+) binding. Arginine 174 lines the anthranilate pocket. Residues aspartate 233 and glutamate 234 each contribute to the Mg(2+) site.

This sequence belongs to the anthranilate phosphoribosyltransferase family. As to quaternary structure, homodimer. Requires Mg(2+) as cofactor.

The catalysed reaction is N-(5-phospho-beta-D-ribosyl)anthranilate + diphosphate = 5-phospho-alpha-D-ribose 1-diphosphate + anthranilate. It participates in amino-acid biosynthesis; L-tryptophan biosynthesis; L-tryptophan from chorismate: step 2/5. Its function is as follows. Catalyzes the transfer of the phosphoribosyl group of 5-phosphorylribose-1-pyrophosphate (PRPP) to anthranilate to yield N-(5'-phosphoribosyl)-anthranilate (PRA). This Albidiferax ferrireducens (strain ATCC BAA-621 / DSM 15236 / T118) (Rhodoferax ferrireducens) protein is Anthranilate phosphoribosyltransferase.